The chain runs to 1119 residues: DNA-directed RNA polymerase subunit beta (1119 aa).

Belongs to the RNA polymerase beta chain family. The RNAP catalytic core consists of 2 alpha, 1 beta, 1 beta' and 1 omega subunit. When a sigma factor is associated with the core the holoenzyme is formed, which can initiate transcription.

The enzyme catalyses RNA(n) + a ribonucleoside 5'-triphosphate = RNA(n+1) + diphosphate. Functionally, DNA-dependent RNA polymerase catalyzes the transcription of DNA into RNA using the four ribonucleoside triphosphates as substrates. The protein is DNA-directed RNA polymerase subunit beta of Thermus thermophilus (strain ATCC 27634 / DSM 579 / HB8).